A 317-amino-acid chain; its full sequence is NAC domain-containing protein 19 (317 aa).

The NAC domain occupies 14–162; sequence LPPGFRFYPT…DWVLCRIYKK (149 aa).

As to quaternary structure, dimer. Interacts with RHA2A, RHA2B or RHG1A, but not with RHA3A or RHA3B. Expressed in stems, flowers, cauline leaves and rosettes.

The protein localises to the nucleus. In terms of biological role, transcription factors that bind specifically to the 5'-CATGTG-3' motif. This Arabidopsis thaliana (Mouse-ear cress) protein is NAC domain-containing protein 19 (NAC019).